Reading from the N-terminus, the 257-residue chain is RING-H2 finger protein ATL5 (257 aa).

Residues 28 to 48 form a helical membrane-spanning segment; it reads IMLASVIILFVAVILILCFHS. An RING-type; atypical zinc finger spans residues 113-155; sequence CSVCLSEFEEDDEGRVLPKCGHVFHVDCIDTWFRSRSSCPLCR. The interval 181 to 209 is disordered; that stretch reads EDTEAGSSSSSDESESSTPSSSSGSPVRF. Residues 185–206 show a composition bias toward low complexity; sequence AGSSSSSDESESSTPSSSSGSP.

This sequence belongs to the RING-type zinc finger family. ATL subfamily.

It localises to the membrane. The catalysed reaction is S-ubiquitinyl-[E2 ubiquitin-conjugating enzyme]-L-cysteine + [acceptor protein]-L-lysine = [E2 ubiquitin-conjugating enzyme]-L-cysteine + N(6)-ubiquitinyl-[acceptor protein]-L-lysine.. It participates in protein modification; protein ubiquitination. The polypeptide is RING-H2 finger protein ATL5 (ATL5) (Arabidopsis thaliana (Mouse-ear cress)).